A 359-amino-acid polypeptide reads, in one-letter code: Protein RecA (359 aa).

69 to 76 (GPESSGKT) contacts ATP. Positions 337–359 (SANSVAKASEEDEEEEVDLEPEE) are disordered. Positions 346–359 (EEDEEEEVDLEPEE) are enriched in acidic residues.

The protein belongs to the RecA family.

The protein resides in the cytoplasm. In terms of biological role, can catalyze the hydrolysis of ATP in the presence of single-stranded DNA, the ATP-dependent uptake of single-stranded DNA by duplex DNA, and the ATP-dependent hybridization of homologous single-stranded DNAs. It interacts with LexA causing its activation and leading to its autocatalytic cleavage. In Nostoc punctiforme (strain ATCC 29133 / PCC 73102), this protein is Protein RecA.